The chain runs to 62 residues: MRCLPVFIILLLLIPSAPSVDAQPTTKDDVPLASLHDNAKRALQMFWNKRDCCPAKLLCCNP.

A signal peptide spans 1 to 22; it reads MRCLPVFIILLLLIPSAPSVDA. Residues 23 to 48 constitute a propeptide that is removed on maturation; the sequence is QPTTKDDVPLASLHDNAKRALQMFWN.

The protein belongs to the conotoxin T superfamily. Post-translationally, contains 2 disulfide bonds that can be either 'C1-C3, C2-C4' or 'C1-C4, C2-C3', since these disulfide connectivities have been observed for conotoxins with cysteine framework V (for examples, see AC P0DQQ7 and AC P81755). Expressed by the venom duct.

It localises to the secreted. Its function is as follows. Mu-conotoxins block voltage-gated sodium channels (Nav). This toxin inhibits tetrodotoxin(TTX)-sensitive sodium channels, but does not affect TTX-resistant sodium channels. Reduces the amplitude of currents without changing the activation and inactivation kinetics of currents. The sequence is that of Mu-conotoxin Lt5d from Conus litteratus (Lettered cone).